A 215-amino-acid polypeptide reads, in one-letter code: Riboflavin synthase (215 aa).

Lumazine-binding repeat units follow at residues 1–96 (MFTG…FGGH) and 97–193 (FVSG…YRFL). Residues 4-6 (GIV), 47-49 (CLT), 61-66 (DVMPET), 100-102 (GHV), Lys-135, 144-146 (SST), and 158-163 (SVIPHT) each bind 2,4-dihydroxypteridine.

Homotrimer.

The catalysed reaction is 2 6,7-dimethyl-8-(1-D-ribityl)lumazine + H(+) = 5-amino-6-(D-ribitylamino)uracil + riboflavin. The protein operates within cofactor biosynthesis; riboflavin biosynthesis; riboflavin from 2-hydroxy-3-oxobutyl phosphate and 5-amino-6-(D-ribitylamino)uracil: step 2/2. In terms of biological role, catalyzes the dismutation of two molecules of 6,7-dimethyl-8-ribityllumazine, resulting in the formation of riboflavin and 5-amino-6-(D-ribitylamino)uracil. This Bacillus amyloliquefaciens (Bacillus velezensis) protein is Riboflavin synthase (ribE).